We begin with the raw amino-acid sequence, 155 residues long: 6,7-dimethyl-8-ribityllumazine synthase (155 aa).

Residues phenylalanine 22, 56-58, and 80-82 each bind 5-amino-6-(D-ribitylamino)uracil; these read AFE and AVI. 85 to 86 lines the (2S)-2-hydroxy-3-oxobutyl phosphate pocket; the sequence is ST. Catalysis depends on histidine 88, which acts as the Proton donor. Phenylalanine 113 serves as a coordination point for 5-amino-6-(D-ribitylamino)uracil. Position 127 (arginine 127) interacts with (2S)-2-hydroxy-3-oxobutyl phosphate.

Belongs to the DMRL synthase family.

The catalysed reaction is (2S)-2-hydroxy-3-oxobutyl phosphate + 5-amino-6-(D-ribitylamino)uracil = 6,7-dimethyl-8-(1-D-ribityl)lumazine + phosphate + 2 H2O + H(+). Its pathway is cofactor biosynthesis; riboflavin biosynthesis; riboflavin from 2-hydroxy-3-oxobutyl phosphate and 5-amino-6-(D-ribitylamino)uracil: step 1/2. Catalyzes the formation of 6,7-dimethyl-8-ribityllumazine by condensation of 5-amino-6-(D-ribitylamino)uracil with 3,4-dihydroxy-2-butanone 4-phosphate. This is the penultimate step in the biosynthesis of riboflavin. The sequence is that of 6,7-dimethyl-8-ribityllumazine synthase from Bifidobacterium longum subsp. infantis (strain ATCC 15697 / DSM 20088 / JCM 1222 / NCTC 11817 / S12).